Here is a 145-residue protein sequence, read N- to C-terminus: Deoxyuridine 5'-triphosphate nucleotidohydrolase (145 aa).

Residues 63–65 (RSG), N76, 80–82 (TID), and K90 each bind substrate.

Belongs to the dUTPase family. Requires Mg(2+) as cofactor.

The enzyme catalyses dUTP + H2O = dUMP + diphosphate + H(+). It functions in the pathway pyrimidine metabolism; dUMP biosynthesis; dUMP from dCTP (dUTP route): step 2/2. This enzyme is involved in nucleotide metabolism: it produces dUMP, the immediate precursor of thymidine nucleotides and it decreases the intracellular concentration of dUTP so that uracil cannot be incorporated into DNA. The sequence is that of Deoxyuridine 5'-triphosphate nucleotidohydrolase from Clostridium acetobutylicum (strain ATCC 824 / DSM 792 / JCM 1419 / IAM 19013 / LMG 5710 / NBRC 13948 / NRRL B-527 / VKM B-1787 / 2291 / W).